The primary structure comprises 548 residues: Probable aquaglyceroporin-4 (548 aa).

The segment covering 1–22 (MAGTQDQSQDYFSKPTTPSTPG) has biased composition (polar residues). Disordered regions lie at residues 1 to 63 (MAGT…LPST), 76 to 101 (SRGF…SHFH), and 158 to 270 (KEET…ESGD). The Cytoplasmic segment spans residues 1-290 (MAGTQDQSQD…ARLRARHPEP (290 aa)). Residues 38-48 (PDRESGTERAK) are compositionally biased toward basic and acidic residues. 2 stretches are compositionally biased toward polar residues: residues 77 to 97 (RGFS…PQHS) and 171 to 200 (SRTT…SRTT). Positions 249–265 (PDFKVDGEPLGHQEKPC) are enriched in basic and acidic residues. Residues 291-311 (LAEFLATAVAIFLGLTGTLSV) traverse the membrane as a helical segment. A glycan (N-linked (GlcNAc...) asparagine) is linked at Asn-312. The Extracellular portion of the chain corresponds to 312 to 327 (NLSATQSQPYGTYETS). Residues 328-348 (CWAWGFAWMFGIYLGGGVSGA) form a helical membrane-spanning segment. Topologically, residues 349-369 (HMNPAISVSLSIFRGFPWRQC) are cytoplasmic. The NPA 1 motif lies at 351–353 (NPA). Residues 370-390 (VIYVFVQFIASIVAGALAYAM) traverse the membrane as a helical segment. Topologically, residues 391-420 (YADSINHVDPDMTKMSMTFFSTPREWVTLK) are extracellular. A helical membrane pass occupies residues 421–441 (SAFFNQVVGSAIMMIAVFALG). Topologically, residues 442 to 448 (DDQNNPP) are cytoplasmic. A helical membrane pass occupies residues 449 to 469 (GAGMHALVLGFLVTTLKFTLG). The Extracellular portion of the chain corresponds to 470–508 (YNIGSALNPASDFGPRVIAYAVGFRGDNVFHSGWWFYGP). The NPA 2 signature appears at 477–479 (NPA). A helical transmembrane segment spans residues 509-529 (WAATLIGSLLGCTLYDGFVFV). The Cytoplasmic segment spans residues 530–548 (GSESPVNFRVDKRVKKLFN).

Belongs to the MIP/aquaporin (TC 1.A.8) family.

Its subcellular location is the membrane. It carries out the reaction H2O(in) = H2O(out). It catalyses the reaction glycerol(in) = glycerol(out). Its function is as follows. Probable water/glycerol channel that may have redundant functions with FgAQP2. This is Probable aquaglyceroporin-4 from Gibberella zeae (strain ATCC MYA-4620 / CBS 123657 / FGSC 9075 / NRRL 31084 / PH-1) (Wheat head blight fungus).